The primary structure comprises 424 residues: Serine--tRNA ligase (424 aa).

232-234 (TAE) contributes to the L-serine binding site. Residue 263-265 (RKE) participates in ATP binding. E286 contributes to the L-serine binding site. 350–353 (EISS) is an ATP binding site. S386 provides a ligand contact to L-serine.

The protein belongs to the class-II aminoacyl-tRNA synthetase family. Type-1 seryl-tRNA synthetase subfamily. Homodimer. The tRNA molecule binds across the dimer.

Its subcellular location is the cytoplasm. The catalysed reaction is tRNA(Ser) + L-serine + ATP = L-seryl-tRNA(Ser) + AMP + diphosphate + H(+). The enzyme catalyses tRNA(Sec) + L-serine + ATP = L-seryl-tRNA(Sec) + AMP + diphosphate + H(+). The protein operates within aminoacyl-tRNA biosynthesis; selenocysteinyl-tRNA(Sec) biosynthesis; L-seryl-tRNA(Sec) from L-serine and tRNA(Sec): step 1/1. Functionally, catalyzes the attachment of serine to tRNA(Ser). Is also able to aminoacylate tRNA(Sec) with serine, to form the misacylated tRNA L-seryl-tRNA(Sec), which will be further converted into selenocysteinyl-tRNA(Sec). The sequence is that of Serine--tRNA ligase from Thermodesulfovibrio yellowstonii (strain ATCC 51303 / DSM 11347 / YP87).